We begin with the raw amino-acid sequence, 113 residues long: uncharacterized protein (113 aa).

The SWIM-type zinc finger occupies 49-91 (FFVVVGKEEYVVEGGFCTCPDFLVNLKGKSPCAHIIAVEVAKI).

This is an uncharacterized protein from Archaeoglobus fulgidus (strain ATCC 49558 / DSM 4304 / JCM 9628 / NBRC 100126 / VC-16).